The sequence spans 147 residues: Hemoglobin subunit beta-1 (147 aa).

The residue at position 2 (Val-2) is an N-acetylvaline. The Globin domain maps to 3 to 147 (HLTDAEKAAV…VASALAHKYH (145 aa)). Lys-18 bears the N6-succinyllysine mark. 3 positions are modified to phosphoserine: Ser-45, Ser-51, and Ser-53. Lys-60 carries the post-translational modification N6-succinyllysine. 2 residues coordinate heme b: His-64 and His-93. The residue at position 105 (Arg-105) is an Asymmetric dimethylarginine. Phosphothreonine is present on Thr-124.

This sequence belongs to the globin family. In terms of assembly, heterotetramer of two alpha chains and two beta chains. In terms of tissue distribution, red blood cells.

Functionally, involved in oxygen transport from the lung to the various peripheral tissues. The protein is Hemoglobin subunit beta-1 (Hbb) of Rattus norvegicus (Rat).